The primary structure comprises 411 residues: 3-phosphoshikimate 1-carboxyvinyltransferase (411 aa).

3 residues coordinate 3-phosphoshikimate: Lys-20, Ser-21, and Arg-25. Lys-20 serves as a coordination point for phosphoenolpyruvate. Residues Gly-86 and Arg-114 each coordinate phosphoenolpyruvate. 6 residues coordinate 3-phosphoshikimate: Ser-156, Ser-157, Gln-158, Ser-181, Asp-295, and Lys-322. Gln-158 provides a ligand contact to phosphoenolpyruvate. Asp-295 serves as the catalytic Proton acceptor. Phosphoenolpyruvate-binding residues include Arg-326, Arg-367, and Lys-393.

It belongs to the EPSP synthase family. In terms of assembly, monomer.

The protein localises to the cytoplasm. The catalysed reaction is 3-phosphoshikimate + phosphoenolpyruvate = 5-O-(1-carboxyvinyl)-3-phosphoshikimate + phosphate. Its pathway is metabolic intermediate biosynthesis; chorismate biosynthesis. Its function is as follows. Catalyzes the transfer of the enolpyruvyl moiety of phosphoenolpyruvate (PEP) to the 5-hydroxyl of shikimate-3-phosphate (S3P) to produce enolpyruvyl shikimate-3-phosphate and inorganic phosphate. The chain is 3-phosphoshikimate 1-carboxyvinyltransferase from Picrophilus torridus (strain ATCC 700027 / DSM 9790 / JCM 10055 / NBRC 100828 / KAW 2/3).